Here is a 75-residue protein sequence, read N- to C-terminus: Small ribosomal subunit protein bS18 (75 aa).

This sequence belongs to the bacterial ribosomal protein bS18 family. Part of the 30S ribosomal subunit. Forms a tight heterodimer with protein bS6.

Binds as a heterodimer with protein bS6 to the central domain of the 16S rRNA, where it helps stabilize the platform of the 30S subunit. This is Small ribosomal subunit protein bS18 from Pasteurella multocida (strain Pm70).